Here is a 400-residue protein sequence, read N- to C-terminus: Queuine tRNA-ribosyltransferase (400 aa).

The active-site Proton acceptor is the D93. Substrate is bound by residues 93–97 (DSGGF), D166, and G247. Residues 277–283 (GIGDVDD) form an RNA binding region. The active-site Nucleophile is the D296. The tract at residues 301–305 (TRLGR) is RNA binding; important for wobble base 34 recognition. The Zn(2+) site is built by C338, C340, C343, and H369.

It belongs to the queuine tRNA-ribosyltransferase family. Homodimer. Within each dimer, one monomer is responsible for RNA recognition and catalysis, while the other monomer binds to the replacement base PreQ1. It depends on Zn(2+) as a cofactor.

The catalysed reaction is 7-aminomethyl-7-carbaguanine + guanosine(34) in tRNA = 7-aminomethyl-7-carbaguanosine(34) in tRNA + guanine. It participates in tRNA modification; tRNA-queuosine biosynthesis. Functionally, catalyzes the base-exchange of a guanine (G) residue with the queuine precursor 7-aminomethyl-7-deazaguanine (PreQ1) at position 34 (anticodon wobble position) in tRNAs with GU(N) anticodons (tRNA-Asp, -Asn, -His and -Tyr). Catalysis occurs through a double-displacement mechanism. The nucleophile active site attacks the C1' of nucleotide 34 to detach the guanine base from the RNA, forming a covalent enzyme-RNA intermediate. The proton acceptor active site deprotonates the incoming PreQ1, allowing a nucleophilic attack on the C1' of the ribose to form the product. After dissociation, two additional enzymatic reactions on the tRNA convert PreQ1 to queuine (Q), resulting in the hypermodified nucleoside queuosine (7-(((4,5-cis-dihydroxy-2-cyclopenten-1-yl)amino)methyl)-7-deazaguanosine). The protein is Queuine tRNA-ribosyltransferase of Roseiflexus sp. (strain RS-1).